The sequence spans 450 residues: Class E vacuolar protein-sorting machinery protein HSE1 (450 aa).

Residues 15–145 enclose the VHS domain; that stretch reads ATDGKLRSDN…RIRRKWPGLL (131 aa). Disordered regions lie at residues 141 to 167, 179 to 212, and 374 to 450; these read WPGLLEEPEKPSKQKVSHQEATDEDQE, FEKSKQQSNGSAVQSNSLQDHNQGQQQPQQQTTS, and PNTQ…PPNY. Basic and acidic residues predominate over residues 147–167; it reads EPEKPSKQKVSHQEATDEDQE. Positions 163 to 182 constitute a UIM domain; it reads DEDQELQRALKMSLEEFEKS. Residues 184–196 show a composition bias toward polar residues; it reads QQSNGSAVQSNSL. The span at 197–209 shows a compositional bias: low complexity; the sequence is QDHNQGQQQPQQQ. The SH3 domain maps to 212 to 271; the sequence is SGIRRVRALYDLNANEQDELSFRKGDVIVVLEQVYRDWWRGSLHGKIGIFPLNYVTPITE. Low complexity predominate over residues 394 to 432; it reads NNTYQTTNGQYTQHNITPQQQYQVPSQNYQSQPPSMQSN.

The protein belongs to the STAM family. Component of the ESCRT-0 complex composed of HSE1 and VPS27.

The protein localises to the endosome membrane. Its function is as follows. Component of the ESCRT-0 complex which is the sorting receptor for ubiquitinated cargo proteins at the multivesicular body (MVB). This chain is Class E vacuolar protein-sorting machinery protein HSE1 (HSE1), found in Candida glabrata (strain ATCC 2001 / BCRC 20586 / JCM 3761 / NBRC 0622 / NRRL Y-65 / CBS 138) (Yeast).